The primary structure comprises 258 residues: Indole-3-glycerol phosphate synthase (258 aa).

The protein belongs to the TrpC family.

It catalyses the reaction 1-(2-carboxyphenylamino)-1-deoxy-D-ribulose 5-phosphate + H(+) = (1S,2R)-1-C-(indol-3-yl)glycerol 3-phosphate + CO2 + H2O. It functions in the pathway amino-acid biosynthesis; L-tryptophan biosynthesis; L-tryptophan from chorismate: step 4/5. This chain is Indole-3-glycerol phosphate synthase, found in Geobacillus sp. (strain WCH70).